Here is a 311-residue protein sequence, read N- to C-terminus: Apolipoprotein E (311 aa).

Positions 1 to 18 are cleaved as a signal peptide; sequence MKALWAVLLVTLLTGCLA. 8 consecutive repeat copies span residues 72–93, 94–115, 116–137, 138–159, 160–181, 182–203, 204–225, and 226–247. An 8 X 22 AA approximate tandem repeats region spans residues 72–247; that stretch reads ALMEDTMTEV…RLEEVREHME (176 aa). Methionine sulfoxide is present on Met-135. A Phosphoserine modification is found at Ser-139. An LDL and other lipoprotein receptors binding region spans residues 150 to 160; the sequence is HLRKMRKRLMR. 154–157 lines the heparin pocket; it reads MRKR. Residues 202–282 are lipid-binding and lipoprotein association; that stretch reads TANLGAGAAQ…GWFEPIVEDM (81 aa). 221 to 228 contacts heparin; it reads GDRIRGRL. Positions 258-311 are homooligomerization; it reads QQIRLQAEIFQARLKGWFEPIVEDMHRQWANLMEKIQASVATNPIITPVAQENQ. The segment at 270 to 282 is specificity for association with VLDL; it reads RLKGWFEPIVEDM.

Belongs to the apolipoprotein A1/A4/E family. Homotetramer. May interact with ABCA1; functionally associated with ABCA1 in the biogenesis of HDLs. May interact with APP/A4 amyloid-beta peptide; the interaction is extremely stable in vitro but its physiological significance is unclear. May interact with MAPT. May interact with MAP2. In the cerebrospinal fluid, interacts with secreted SORL1. Interacts with PMEL; this allows the loading of PMEL luminal fragment on ILVs to induce fibril nucleation. APOE exists as multiple glycosylated and sialylated glycoforms within cells and in plasma. The extent of glycosylation and sialylation are tissue and context specific. Post-translationally, glycated in plasma VLDL. In terms of processing, phosphorylated by FAM20C in the extracellular medium.

It is found in the secreted. The protein localises to the extracellular space. The protein resides in the extracellular matrix. Its subcellular location is the extracellular vesicle. It localises to the endosome. It is found in the multivesicular body. APOE is an apolipoprotein, a protein associating with lipid particles, that mainly functions in lipoprotein-mediated lipid transport between organs via the plasma and interstitial fluids. APOE is a core component of plasma lipoproteins and is involved in their production, conversion and clearance. Apolipoproteins are amphipathic molecules that interact both with lipids of the lipoprotein particle core and the aqueous environment of the plasma. As such, APOE associates with chylomicrons, chylomicron remnants, very low density lipoproteins (VLDL) and intermediate density lipoproteins (IDL) but shows a preferential binding to high-density lipoproteins (HDL). It also binds a wide range of cellular receptors including the LDL receptor/LDLR and the very low-density lipoprotein receptor/VLDLR that mediate the cellular uptake of the APOE-containing lipoprotein particles. Finally, APOE also has a heparin-binding activity and binds heparan-sulfate proteoglycans on the surface of cells, a property that supports the capture and the receptor-mediated uptake of APOE-containing lipoproteins by cells. This Mus musculus (Mouse) protein is Apolipoprotein E (Apoe).